The sequence spans 586 residues: Phosphoenolpyruvate-protein phosphotransferase (586 aa).

The active-site Tele-phosphohistidine intermediate is the H201. Phosphoenolpyruvate contacts are provided by R308 and R345. Mg(2+) contacts are provided by E446 and D470. Phosphoenolpyruvate is bound by residues 469-470 and R480; that span reads ND. Catalysis depends on C517, which acts as the Proton donor.

It belongs to the PEP-utilizing enzyme family. In terms of assembly, homodimer. Mg(2+) is required as a cofactor.

It localises to the cytoplasm. The enzyme catalyses L-histidyl-[protein] + phosphoenolpyruvate = N(pros)-phospho-L-histidyl-[protein] + pyruvate. Functionally, general (non sugar-specific) component of the phosphoenolpyruvate-dependent sugar phosphotransferase system (sugar PTS). This major carbohydrate active-transport system catalyzes the phosphorylation of incoming sugar substrates concomitantly with their translocation across the cell membrane. Enzyme I transfers the phosphoryl group from phosphoenolpyruvate (PEP) to the phosphoryl carrier protein (HPr). This Cupriavidus necator (strain ATCC 17699 / DSM 428 / KCTC 22496 / NCIMB 10442 / H16 / Stanier 337) (Ralstonia eutropha) protein is Phosphoenolpyruvate-protein phosphotransferase.